A 147-amino-acid chain; its full sequence is Large ribosomal subunit protein uL15 (147 aa).

A compositionally biased stretch (basic and acidic residues) spans 1–11; that stretch reads MKLHDLRPAKD. Positions 1–57 are disordered; it reads MKLHDLRPAKDAKKKRKRVGRGTGSGRGFTSGRGSKGQNARSGGGVRPTFEGGQTPL. Residues 21-35 are compositionally biased toward gly residues; the sequence is RGTGSGRGFTSGRGS.

Belongs to the universal ribosomal protein uL15 family. Part of the 50S ribosomal subunit.

Functionally, binds to the 23S rRNA. The protein is Large ribosomal subunit protein uL15 of Halothermothrix orenii (strain H 168 / OCM 544 / DSM 9562).